The primary structure comprises 734 residues: 1,4-alpha-glucan branching enzyme GlgB (734 aa).

D417 serves as the catalytic Nucleophile. E470 functions as the Proton donor in the catalytic mechanism.

It belongs to the glycosyl hydrolase 13 family. GlgB subfamily. In terms of assembly, monomer.

It carries out the reaction Transfers a segment of a (1-&gt;4)-alpha-D-glucan chain to a primary hydroxy group in a similar glucan chain.. The protein operates within glycan biosynthesis; glycogen biosynthesis. Functionally, catalyzes the formation of the alpha-1,6-glucosidic linkages in glycogen by scission of a 1,4-alpha-linked oligosaccharide from growing alpha-1,4-glucan chains and the subsequent attachment of the oligosaccharide to the alpha-1,6 position. This chain is 1,4-alpha-glucan branching enzyme GlgB (glgB), found in Rhizobium radiobacter (Agrobacterium tumefaciens).